The following is a 1227-amino-acid chain: ATP-dependent helicase/nuclease subunit A (1227 aa).

One can recognise a UvrD-like helicase ATP-binding domain in the interval 37–503; that stretch reads QKRTAEQIEA…ILLKENFRSQ (467 aa). 58 to 65 contacts ATP; sequence ASAGSGKT. The UvrD-like helicase C-terminal domain occupies 532 to 816; it reads SLVAGSPGQK…QLMTIHKSKG (285 aa).

This sequence belongs to the helicase family. AddA subfamily. In terms of assembly, heterodimer of AddA and AddB/RexB. Mg(2+) is required as a cofactor.

The enzyme catalyses Couples ATP hydrolysis with the unwinding of duplex DNA by translocating in the 3'-5' direction.. The catalysed reaction is ATP + H2O = ADP + phosphate + H(+). In terms of biological role, the heterodimer acts as both an ATP-dependent DNA helicase and an ATP-dependent, dual-direction single-stranded exonuclease. Recognizes the chi site generating a DNA molecule suitable for the initiation of homologous recombination. The AddA nuclease domain is required for chi fragment generation; this subunit has the helicase and 3' -&gt; 5' nuclease activities. The polypeptide is ATP-dependent helicase/nuclease subunit A (Streptococcus suis (strain 98HAH33)).